The sequence spans 870 residues: Translation initiation factor IF-2 (870 aa).

Residues 49 to 284 (SFQNSAPAEK…TKRKERPLPE (236 aa)) are disordered. 2 stretches are compositionally biased toward basic and acidic residues: residues 70–81 (RKNEKKQEDNAG) and 94–109 (QNND…RDHS). Residues 116–127 (KPKAAALLQQFK) show a composition bias toward low complexity. 2 stretches are compositionally biased toward basic and acidic residues: residues 144-159 (AKKE…KKEQ) and 168-183 (NKES…EKKV). The segment covering 254 to 279 (RKRRKNKNKKRKQEQKPKKQITKRKE) has biased composition (basic residues). Positions 371-540 (KRPPVVTIMG…LLQADMMELK (170 aa)) constitute a tr-type G domain. A G1 region spans residues 380–387 (GHVDHGKT). Position 380 to 387 (380 to 387 (GHVDHGKT)) interacts with GTP. Residues 405–409 (GITQK) are G2. The G3 stretch occupies residues 426 to 429 (DTPG). Residues 426–430 (DTPGH) and 480–483 (NKMD) each bind GTP. The segment at 480–483 (NKMD) is G4. The segment at 516-518 (SAR) is G5.

This sequence belongs to the TRAFAC class translation factor GTPase superfamily. Classic translation factor GTPase family. IF-2 subfamily.

It is found in the cytoplasm. One of the essential components for the initiation of protein synthesis. Protects formylmethionyl-tRNA from spontaneous hydrolysis and promotes its binding to the 30S ribosomal subunits. Also involved in the hydrolysis of GTP during the formation of the 70S ribosomal complex. The sequence is that of Translation initiation factor IF-2 from Lactobacillus helveticus (strain DPC 4571).